A 302-amino-acid chain; its full sequence is Paired immunoglobulin-like type 2 receptor alpha (302 aa).

An N-terminal signal peptide occupies residues 1–31 (MALLISLPGGTPAMAQILLLLSSACLHAGNS). The Extracellular portion of the chain corresponds to 32 to 198 (ERSNRKNGFG…GGLDLQTTVG (167 aa)). 2 N-linked (GlcNAc...) asparagine glycosylation sites follow: asparagine 90 and asparagine 107. The chain crosses the membrane as a helical span at residues 199–219 (LATAAAVFLVGVLGLIVFLWW). At 220–302 (KRRRQGQKTK…ETVYSIVKAK (83 aa)) the chain is on the cytoplasmic side. Residues 228–248 (TKAEIPAREPLETSEKHESVG) show a composition bias toward basic and acidic residues. The tract at residues 228–293 (TKAEIPAREP…LPVHGNPQEE (66 aa)) is disordered. Short sequence motifs (ITIM motif) lie at residues 265–270 (IVYASI) and 294–299 (TVYSIV). Polar residues predominate over residues 270–280 (ISLSSPTSPGT).

As to quaternary structure, interacts with CD99. Phosphorylated on tyrosine residues.

It localises to the membrane. Paired receptors consist of highly related activating and inhibitory receptors and are widely involved in the regulation of the immune system. Receptor for CD99 and PIANP. This Mus musculus (Mouse) protein is Paired immunoglobulin-like type 2 receptor alpha (Pilra).